The primary structure comprises 190 residues: MINIVLFGKPGAGKGTQAEFLKEKYNLTHLSTGDIFRFNIKNETELGKLAKTFMDKGDLVPDAVTIKMLESEVDKNQHSKGFLFDGFPRTLAQAAALDTFLASKDQEVTATIALEADDEILVQRLLERGKTSGRVDDQDEEKIRNRYQEYNEKTAPLMSYYKNNKKFHAVNGIGTIQEITKRLSEVINNL.

ATP is bound at residue 11–16 (GAGKGT). Positions 31-60 (STGDIFRFNIKNETELGKLAKTFMDKGDLV) are NMP. AMP contacts are provided by residues T32, R37, 58-60 (DLV), 86-89 (GFPR), and Q93. An LID region spans residues 127–137 (ERGKTSGRVDD). An ATP-binding site is contributed by R128. Positions 134 and 146 each coordinate AMP. G174 lines the ATP pocket.

The protein belongs to the adenylate kinase family. In terms of assembly, monomer.

The protein resides in the cytoplasm. It carries out the reaction AMP + ATP = 2 ADP. Its pathway is purine metabolism; AMP biosynthesis via salvage pathway; AMP from ADP: step 1/1. Functionally, catalyzes the reversible transfer of the terminal phosphate group between ATP and AMP. Plays an important role in cellular energy homeostasis and in adenine nucleotide metabolism. The polypeptide is Adenylate kinase (Flavobacterium psychrophilum (strain ATCC 49511 / DSM 21280 / CIP 103535 / JIP02/86)).